The chain runs to 187 residues: NADH-quinone oxidoreductase subunit C 2 (187 aa).

Positions 153-187 (YKDKLNPFGAEGPPPTQPDLATRDIPQGRPSTPES) are disordered.

It belongs to the complex I 30 kDa subunit family. In terms of assembly, NDH-1 is composed of 14 different subunits. Subunits NuoB, C, D, E, F, and G constitute the peripheral sector of the complex.

Its subcellular location is the cell inner membrane. The enzyme catalyses a quinone + NADH + 5 H(+)(in) = a quinol + NAD(+) + 4 H(+)(out). Functionally, NDH-1 shuttles electrons from NADH, via FMN and iron-sulfur (Fe-S) centers, to quinones in the respiratory chain. The immediate electron acceptor for the enzyme in this species is believed to be ubiquinone. Couples the redox reaction to proton translocation (for every two electrons transferred, four hydrogen ions are translocated across the cytoplasmic membrane), and thus conserves the redox energy in a proton gradient. This Rhizobium etli (strain CIAT 652) protein is NADH-quinone oxidoreductase subunit C 2.